The following is a 93-amino-acid chain: Small integral membrane protein 36 (93 aa).

A helical transmembrane segment spans residues 14-34 (LIILVASYVILLLVFLVSCVL). A disordered region spans residues 70-93 (SHWARGPSLHLKDPAPLGKKSTVV).

It is found in the membrane. This Mus musculus (Mouse) protein is Small integral membrane protein 36.